Reading from the N-terminus, the 740-residue chain is Ethylene receptor 1 (740 aa).

The next 3 helical transmembrane spans lie at 23–43, 54–74, and 92–112; these read ISDFFIALAYFSIPLELIYFV, VLVQFGAFIVLCGATHLINLW, and VLTAVVSCATALMLVHIIPDL. Cu cation is bound by residues cysteine 65 and histidine 69. The GAF domain occupies 158–307; the sequence is DRHTILKTTL…VVADQVAVAL (150 aa). The 239-residue stretch at 350–588 folds into the Histidine kinase domain; that stretch reads VMNHEMRTPM…TFIVKLGIAD (239 aa). Histidine 353 bears the Phosphohistidine; by autocatalysis mark. A Response regulatory domain is found at 614-731; sequence KVLVMDDNGV…KMRSVLSELI (118 aa). Aspartate 662 carries the post-translational modification 4-aspartylphosphate.

The protein belongs to the ethylene receptor family. As to quaternary structure, homodimer; disulfide-linked. The cofactor is Cu cation. Activation probably requires a transfer of a phosphate group between a His in the transmitter domain and an Asp of the receiver domain. In seeds and placenta.

The protein resides in the endoplasmic reticulum membrane. It catalyses the reaction ATP + protein L-histidine = ADP + protein N-phospho-L-histidine.. In terms of biological role, may act early in the ethylene signal transduction pathway, possibly as an ethylene receptor, or as a regulator of the pathway. This Cucumis melo var. cantalupensis (Netted muskmelon) protein is Ethylene receptor 1 (ETR1).